An 80-amino-acid polypeptide reads, in one-letter code: Defensin-like protein 14 (80 aa).

Residues 1-29 (MAKSAAIITFLFAALVLFAAFEAPIMVEA) form the signal peptide. Q30 carries the post-translational modification Pyrrolidone carboxylic acid. 4 cysteine pairs are disulfide-bonded: C33–C80, C44–C65, C50–C74, and C54–C76.

It belongs to the DEFL family.

It localises to the secreted. Functionally, confers broad-spectrum resistance to pathogens. Has antifungal activity in vitro. The chain is Defensin-like protein 14 (PDF1.3) from Arabidopsis thaliana (Mouse-ear cress).